The primary structure comprises 564 residues: MESITKVSMSVCPFVRSTSTQALRQLSQTSGALANQARQCPIAGNAIRAKEISIRSYSSATKPARATAATPSTPEATFNVTSSFELGSKETAFDYNGYLGNELEKKRSDKSYRYFNNINRLANEFPKAHRTQEEDKVTVWCSNDYLGMGKNENTLKEMKRVLDKYGSGAGGTRNIAGHNSHAIKLESELAALHKHDAALVFSSCFVANDAVLSLLGQKIKDLVIFSDELNHASMIQGIRNSRARKHIFKHNNLADLESKLAQYPKSTPKLIAFESVYSMCGSIAPIEAICDLAEKYGALTFLDEVHAVGMYGPHGAGVAEHLNFEAHLKSGIERPEITTVMSRVDMVTGTLGKAYGVVGGYITGKTNLIDWFRSYAPGFIFTTSLPPAIMAGCSASIRYQRATLKDRIAQQKNTRLVKNNLNELGIPVIPNPSHIVPVLVGNAADAKRASDLLLNKHDIYVQAINFPTVPIGEERLRITPTPGHGPELSKQLVEAVDSVFTELNLNRINDWKKLGGLVGVGVEGAAKVEHIWTEEQLALTDADLNPNVVNPAISPLDVSSGIST.

Residues 1-57 (MESITKVSMSVCPFVRSTSTQALRQLSQTSGALANQARQCPIAGNAIRAKEISIRSY) constitute a mitochondrion transit peptide. Substrate contacts are provided by R113, S226, and K245. Residues S278, H306, and T350 each coordinate pyridoxal 5'-phosphate. K353 is an active-site residue. K353 is modified (N6-(pyridoxal phosphate)lysine). The pyridoxal 5'-phosphate site is built by T382 and T383. A substrate-binding site is contributed by T468.

It belongs to the class-II pyridoxal-phosphate-dependent aminotransferase family. As to quaternary structure, homodimer. Pyridoxal 5'-phosphate serves as cofactor.

The protein resides in the mitochondrion matrix. The enzyme catalyses succinyl-CoA + glycine + H(+) = 5-aminolevulinate + CO2 + CoA. The protein operates within porphyrin-containing compound metabolism; protoporphyrin-IX biosynthesis; 5-aminolevulinate from glycine: step 1/1. Its function is as follows. Catalyzes the synthesis of 5-aminolevulinate (ALA) from succinyl-CoA and glycine, the first and rate-limiting step in heme biosynthesis. This Candida albicans (strain SC5314 / ATCC MYA-2876) (Yeast) protein is 5-aminolevulinate synthase, mitochondrial (HEM1).